A 60-amino-acid chain; its full sequence is Large ribosomal subunit protein bL32 (60 aa).

The segment at 1 to 22 (MAVPARHTSKAKKNKRRTHYKL) is disordered. Basic residues predominate over residues 7-20 (HTSKAKKNKRRTHY).

Belongs to the bacterial ribosomal protein bL32 family.

In Streptococcus pyogenes serotype M3 (strain ATCC BAA-595 / MGAS315), this protein is Large ribosomal subunit protein bL32.